Reading from the N-terminus, the 417-residue chain is Type IV inositol polyphosphate 5-phosphatase 9 (417 aa).

Catalytic regions lie at residues 258-273 (DRVIFLGDLNYRISLP) and 339-354 (KKRAPAWCDRIIWYGN).

Belongs to the inositol polyphosphate 5-phosphatase family. In terms of tissue distribution, specifically expressed in roots.

It carries out the reaction a 1,2-diacyl-sn-glycero-3-phospho-(1D-myo-inositol-4,5-bisphosphate) + H2O = a 1,2-diacyl-sn-glycero-3-phospho-(1D-myo-inositol 4-phosphate) + phosphate. The catalysed reaction is a 1,2-diacyl-sn-glycero-3-phospho-(1D-myo-inositol-3,4,5-trisphosphate) + H2O = a 1,2-diacyl-sn-glycero-3-phospho-(1D-myo-inositol-3,4-bisphosphate) + phosphate. Its function is as follows. Has phosphatase activity toward PtdIns(4,5)P2 and at a lower extent toward PtdIns(3,4,5)P3 but not toward Ins(1,4,5)P3. Functions in salt stress response by regulating reactive oxygen species (ROS) production, endocytosis, Ca(2+) influx and stress-responsive genes expression. In Arabidopsis thaliana (Mouse-ear cress), this protein is Type IV inositol polyphosphate 5-phosphatase 9.